A 471-amino-acid chain; its full sequence is Trigger factor (471 aa).

Residues 169 to 264 (GDVAVVDFKG…LKEIKEKELP (96 aa)) enclose the PPIase FKBP-type domain. Positions 443-471 (SLASQESEITAPETEAETIEVTAESTTGE) are disordered. Low complexity predominate over residues 448–471 (ESEITAPETEAETIEVTAESTTGE).

The protein belongs to the FKBP-type PPIase family. Tig subfamily.

It is found in the cytoplasm. The catalysed reaction is [protein]-peptidylproline (omega=180) = [protein]-peptidylproline (omega=0). Its function is as follows. Involved in protein export. Acts as a chaperone by maintaining the newly synthesized protein in an open conformation. Functions as a peptidyl-prolyl cis-trans isomerase. The sequence is that of Trigger factor from Trichormus variabilis (strain ATCC 29413 / PCC 7937) (Anabaena variabilis).